The following is a 242-amino-acid chain: Probable porphobilinogen deaminase (242 aa).

The protein belongs to the HMBS family.

It carries out the reaction 4 porphobilinogen + H2O = hydroxymethylbilane + 4 NH4(+). It participates in porphyrin-containing compound metabolism; protoporphyrin-IX biosynthesis; coproporphyrinogen-III from 5-aminolevulinate: step 2/4. Tetrapolymerization of the monopyrrole PBG into the hydroxymethylbilane pre-uroporphyrinogen in several discrete steps. The protein is Probable porphobilinogen deaminase (hemC) of Chlamydia muridarum (strain MoPn / Nigg).